An 87-amino-acid chain; its full sequence is UPF0335 protein Meso_3367 (87 aa).

It belongs to the UPF0335 family.

This is UPF0335 protein Meso_3367 from Chelativorans sp. (strain BNC1).